A 546-amino-acid chain; its full sequence is Cryptochrome DASH, chloroplastic/mitochondrial (546 aa).

A Photolyase/cryptochrome alpha/beta domain is found at 4 to 151 (TRVVIWFRND…TMERHWGSTL (148 aa)). Residues 497 to 546 (PRRDFTEMGSPPGPRRGGGGGGRGRGRPGGSTPNRGTKARVASVYDTVYG) form a disordered region. A compositionally biased stretch (gly residues) spans 511–525 (RRGGGGGGRGRGRPG).

The protein belongs to the DNA photolyase class-1 family. FAD serves as cofactor. It depends on (6R)-5,10-methylene-5,6,7,8-tetrahydrofolate as a cofactor.

It localises to the plastid. Its subcellular location is the chloroplast. It is found in the mitochondrion. In terms of biological role, may have a photoreceptor function. Binds ss- and ds-DNA in a sequence non-specific manner, lacks photolyase activity. In Ostreococcus tauri, this protein is Cryptochrome DASH, chloroplastic/mitochondrial.